The following is a 143-amino-acid chain: MRVEAIVEVRMTEDRGKVLKALENVFTPMRIEERQSDMGTILVATCEGHKCLEKLRSAIWRQGIQDAARSVISRGIVGEDTVVFSVNKQAAYVGVVSFVTEAGESPLGPITFTVKTNDVRQFIDWLAPRTYRGRVYYEAPPPD.

The protein belongs to the UPF0201 family.

The protein is UPF0201 protein PAE1632 of Pyrobaculum aerophilum (strain ATCC 51768 / DSM 7523 / JCM 9630 / CIP 104966 / NBRC 100827 / IM2).